We begin with the raw amino-acid sequence, 671 residues long: UvrABC system protein B (671 aa).

One can recognise a Helicase ATP-binding domain in the interval Glu-25–Ile-178. Gly-38–Thr-45 provides a ligand contact to ATP. The short motif at Tyr-91–Ile-114 is the Beta-hairpin element. The 167-residue stretch at Gln-435 to Leu-601 folds into the Helicase C-terminal domain. The region spanning Glu-626 to Lys-661 is the UVR domain.

The protein belongs to the UvrB family. In terms of assembly, forms a heterotetramer with UvrA during the search for lesions. Interacts with UvrC in an incision complex.

It localises to the cytoplasm. In terms of biological role, the UvrABC repair system catalyzes the recognition and processing of DNA lesions. A damage recognition complex composed of 2 UvrA and 2 UvrB subunits scans DNA for abnormalities. Upon binding of the UvrA(2)B(2) complex to a putative damaged site, the DNA wraps around one UvrB monomer. DNA wrap is dependent on ATP binding by UvrB and probably causes local melting of the DNA helix, facilitating insertion of UvrB beta-hairpin between the DNA strands. Then UvrB probes one DNA strand for the presence of a lesion. If a lesion is found the UvrA subunits dissociate and the UvrB-DNA preincision complex is formed. This complex is subsequently bound by UvrC and the second UvrB is released. If no lesion is found, the DNA wraps around the other UvrB subunit that will check the other stand for damage. In Thermodesulfovibrio yellowstonii (strain ATCC 51303 / DSM 11347 / YP87), this protein is UvrABC system protein B.